Here is a 181-residue protein sequence, read N- to C-terminus: ADP-ribosylation factor 2-A (181 aa).

Gly2 carries N-myristoyl glycine lipidation. Residues 24–31, 67–71, and 126–129 contribute to the GTP site; these read GLDAAGKT, DVGGQ, and NKQD.

The protein belongs to the small GTPase superfamily. Arf family.

Its subcellular location is the golgi apparatus. With respect to regulation, activated by AGD10. Its function is as follows. GTP-binding protein involved in protein trafficking; may modulate vesicle budding and uncoating within the Golgi apparatus. The protein is ADP-ribosylation factor 2-A (ARF2-A) of Arabidopsis thaliana (Mouse-ear cress).